The following is a 148-amino-acid chain: Glutamyl-tRNA(Gln) amidotransferase subunit C, mitochondrial (148 aa).

Belongs to the GatC family. Subunit of the heterotrimeric GatCAB amidotransferase (AdT) complex, composed of A, B and C subunits.

The protein resides in the mitochondrion. The catalysed reaction is L-glutamyl-tRNA(Gln) + L-glutamine + ATP + H2O = L-glutaminyl-tRNA(Gln) + L-glutamate + ADP + phosphate + H(+). Its function is as follows. Allows the formation of correctly charged Gln-tRNA(Gln) through the transamidation of misacylated Glu-tRNA(Gln) in the mitochondria. The reaction takes place in the presence of glutamine and ATP through an activated gamma-phospho-Glu-tRNA(Gln). The chain is Glutamyl-tRNA(Gln) amidotransferase subunit C, mitochondrial from Drosophila yakuba (Fruit fly).